Consider the following 312-residue polypeptide: GATA zinc finger domain-containing protein 20 (312 aa).

2 disordered regions span residues M1–P45 and T213–N232. Positions Q29–P45 are enriched in low complexity. The GATA-type zinc-finger motif lies at C260 to C287.

In Dictyostelium discoideum (Social amoeba), this protein is GATA zinc finger domain-containing protein 20 (gtaT).